Consider the following 1092-residue polypeptide: Extended synaptotagmin-1 (1092 aa).

The residue at position 1 (Met-1) is an N-acetylmethionine. The Cytoplasmic portion of the chain corresponds to 1-28; it reads MEHSPEEGASPEPSGQPPATDSTRDGGS. The interval 1-36 is disordered; that stretch reads MEHSPEEGASPEPSGQPPATDSTRDGGSGVPPAGPG. The helical transmembrane segment at 29 to 49 threads the bilayer; the sequence is GVPPAGPGAASEALAVLTSFG. The Lumenal segment spans residues 50–52; it reads RRL. Residues 53–73 form a helical membrane-spanning segment; it reads LVLVPVYLAGAAGLSVGFVLF. Topologically, residues 74–1092 are cytoplasmic; that stretch reads GLALYLGWRR…LMDDRDKGGS (1019 aa). The 179-residue stretch at 125-303 folds into the SMP-LTD domain; it reads DVEKAEWLNK…LPNRLLVPLV (179 aa). C2 domains are found at residues 302–423, 444–570, 616–738, and 769–886; these read LVPD…DNWY, DAEK…QLSS, DAPP…DEWL, and QVNS…ALSG. The residue at position 314 (Ser-314) is a Phosphoserine; by CDK5. Positions 334, 335, 347, 394, 396, 398, 400, and 401 each coordinate Ca(2+). The segment at 604–628 is disordered; that stretch reads WDRESLETGSSVDAPPRPYHTTPNS. Position 804 is an N6-acetyllysine (Lys-804). The residue at position 807 (Ser-807) is a Phosphoserine. The disordered stretch occupies residues 909–937; it reads HSHSYSHSHSSSSLNDEPEALGGPTHPAS. The segment covering 911–921 has biased composition (low complexity); the sequence is HSYSHSHSSSS. Residues Ser-937 and Ser-951 each carry the phosphoserine modification. The C2 5 domain maps to 959 to 1081; the sequence is PLGQVKLTVW…DLSQGAAQWY (123 aa). Position 997 is a phosphotyrosine (Tyr-997). A required for phosphatidylinositol 4,5-bisphosphate-dependent location at the cell membrane region spans residues 1006-1013; it reads KNRSTKRK.

Belongs to the extended synaptotagmin family. As to quaternary structure, interacts with ESYT2 and ESYT3. Interacts with ADGRD1; inhibiting the G-protein-coupled receptor activity of ADGRD1. Interaction with ADGRD1 is abolished when cytosolic calcium increases, relieving ADGRD1 G-protein-coupled receptor activity. Interacts (phosphorylated form) with SLC2A4. In terms of processing, phosphorylated on Ser residues in insulin-treated adipocytes (in vitro); this promotes interaction with SLC2A4.

The protein localises to the endoplasmic reticulum membrane. It localises to the cell membrane. In terms of biological role, binds calcium (via the C2 domains) and translocates to sites of contact between the endoplasmic reticulum and the cell membrane in response to increased cytosolic calcium levels. Helps tether the endoplasmic reticulum to the cell membrane and promotes the formation of appositions between the endoplasmic reticulum and the cell membrane. Acts as an inhibitor of ADGRD1 G-protein-coupled receptor activity in absence of cytosolic calcium. Binds glycerophospholipids in a barrel-like domain and may play a role in cellular lipid transport. This Mus musculus (Mouse) protein is Extended synaptotagmin-1 (Esyt1).